The chain runs to 96 residues: Aspartyl/glutamyl-tRNA(Asn/Gln) amidotransferase subunit C (96 aa).

It belongs to the GatC family. In terms of assembly, heterotrimer of A, B and C subunits.

It catalyses the reaction L-glutamyl-tRNA(Gln) + L-glutamine + ATP + H2O = L-glutaminyl-tRNA(Gln) + L-glutamate + ADP + phosphate + H(+). The enzyme catalyses L-aspartyl-tRNA(Asn) + L-glutamine + ATP + H2O = L-asparaginyl-tRNA(Asn) + L-glutamate + ADP + phosphate + 2 H(+). Allows the formation of correctly charged Asn-tRNA(Asn) or Gln-tRNA(Gln) through the transamidation of misacylated Asp-tRNA(Asn) or Glu-tRNA(Gln) in organisms which lack either or both of asparaginyl-tRNA or glutaminyl-tRNA synthetases. The reaction takes place in the presence of glutamine and ATP through an activated phospho-Asp-tRNA(Asn) or phospho-Glu-tRNA(Gln). The sequence is that of Aspartyl/glutamyl-tRNA(Asn/Gln) amidotransferase subunit C from Leptospira borgpetersenii serovar Hardjo-bovis (strain JB197).